Here is a 144-residue protein sequence, read N- to C-terminus: Hexon-interlacing protein (144 aa).

A coiled-coil region spans residues 106–133 (LTVMLAKLETLTAQLEELSQKVEELADA).

The protein belongs to the adenoviridae hexon-interlacing protein family. As to quaternary structure, homotrimer. Interacts with hexon protein; this interaction tethers the hexons together. Self-interacts with adjacent proteins. Interacts with kinesin light chain KLC1; this interaction leads to capsid disruption at the nuclear pore complex during virus entry into host cell.

The protein localises to the virion. Its subcellular location is the host nucleus. Functionally, structural component of the virion that acts as a cement protein on the capsid exterior and forms triskelion structures consisting of three molecules that stabilize three hexon trimers at the center of each icosahedral facet and fixes the peripentonal hexons. Dispensable for assembly. During virus entry, recruits the anterograde motor kinesin-1 to the capsid docked at the nuclear pore complex thereby subjecting the docked capsid to a pulling force. The resulting tension leads to capsid disruption, dispersion of capsid fragments toward cell periphery and eventually viral DNA entry into the host nucleus. This is Hexon-interlacing protein from Homo sapiens (Human).